Here is an 82-residue protein sequence, read N- to C-terminus: MVFLLCFFLVADVSYGINGDCELPKVVGPCRGGFRRYYYNSSSKRCEKFIYGGCRGNANNFHTLEECEKVCGVRSRDSPKEN.

The first 16 residues, 1–16, serve as a signal peptide directing secretion; sequence MVFLLCFFLVADVSYG. Residues 21 to 71 enclose the BPTI/Kunitz inhibitor domain; it reads CELPKVVGPCRGGFRRYYYNSSSKRCEKFIYGGCRGNANNFHTLEECEKVC. Cystine bridges form between Cys21–Cys71, Cys30–Cys54, and Cys46–Cys67. Residues 76–82 constitute a propeptide that is removed on maturation; it reads RDSPKEN.

Belongs to the venom Kunitz-type family. Sea anemone type 2 potassium channel toxin subfamily.

It is found in the secreted. Its subcellular location is the nematocyst. In terms of biological role, serine protease inhibitor that inhibits both tissue and plasma kallikreins. Has hemolytic activity. Inhibits voltage-gated potassium channels (Kv). The chain is U-actitoxin-Avd3m from Anemonia viridis (Snakelocks anemone).